A 246-amino-acid polypeptide reads, in one-letter code: Polyhedrin (246 aa).

Belongs to the polyhedrin family.

Major component of the virus occlusion bodies, which are large proteinaceous structures (polyhedra), that protect the virus from the outside environment for extended periods until they are ingested by insect larvae. This Mamestra brassicae nuclear polyhedrosis virus (MbNPV) protein is Polyhedrin (PH).